The chain runs to 223 residues: Protein disulfide-isomerase-like protein EhSep2 (223 aa).

An N-terminal signal peptide occupies residues 1-17; the sequence is MALRSLTLLCAAAGASA. Residues 18-125 form the Thioredoxin domain; the sequence is GAIELTPDNF…DELKKFAENE (108 aa). Position 47 (Sec-47) is a non-standard amino acid, selenocysteine. The stretch at 155–201 forms a coiled coil; it reads EKRTEMLETLKKELADAESTHEALLKELQATYKESMDKLEKLKEESA. Residues 201–223 are disordered; the sequence is APKIKLLKAATPAPKAEGAKDEV. Residues 203–216 show a composition bias toward low complexity; sequence KIKLLKAATPAPKA. The short motif at 220–223 is the Prevents secretion from ER element; that stretch reads KDEV.

It belongs to the protein disulfide isomerase family.

The protein resides in the endoplasmic reticulum lumen. The sequence is that of Protein disulfide-isomerase-like protein EhSep2 (SEP2) from Emiliania huxleyi (Coccolithophore).